The primary structure comprises 586 residues: Assimilatory ferredoxin-dependent nitrite reductase (586 aa).

Cys-411, Cys-417, Cys-455, and Cys-459 together coordinate [4Fe-4S] cluster. Cys-459 contributes to the siroheme binding site. Residues 566–586 are disordered; the sequence is SWYPFADEDEPPKTEQPMTSD.

The protein belongs to the nitrite and sulfite reductase 4Fe-4S domain family. Monomer. The cofactor is siroheme. [4Fe-4S] cluster is required as a cofactor.

It carries out the reaction 6 oxidized [2Fe-2S]-[ferredoxin] + NH4(+) + 2 H2O = nitrite + 6 reduced [2Fe-2S]-[ferredoxin] + 8 H(+). Its pathway is nitrogen metabolism; nitrate reduction (assimilation). With respect to regulation, inhibited by cyanide and azide. In terms of biological role, catalyzes the reduction of nitrite to ammonium in the nitrate assimilation pathway, using ferredoxin as the electron donor. Can use reduced methyl viologen but neither NADPH nor NADH as electron donors. The chain is Assimilatory ferredoxin-dependent nitrite reductase from Haloferax mediterranei (strain ATCC 33500 / DSM 1411 / JCM 8866 / NBRC 14739 / NCIMB 2177 / R-4) (Halobacterium mediterranei).